The primary structure comprises 246 residues: Pyridoxine 5'-phosphate synthase (246 aa).

Asn12 lines the 3-amino-2-oxopropyl phosphate pocket. 14-15 is a binding site for 1-deoxy-D-xylulose 5-phosphate; it reads DH. Arg23 provides a ligand contact to 3-amino-2-oxopropyl phosphate. The Proton acceptor role is filled by His48. 2 residues coordinate 1-deoxy-D-xylulose 5-phosphate: Arg50 and His55. The active-site Proton acceptor is the Glu75. Position 105 (Thr105) interacts with 1-deoxy-D-xylulose 5-phosphate. The active-site Proton donor is His196. Residues Gly197 and 218–219 contribute to the 3-amino-2-oxopropyl phosphate site; that span reads GH.

It belongs to the PNP synthase family. Homooctamer; tetramer of dimers.

It localises to the cytoplasm. It carries out the reaction 3-amino-2-oxopropyl phosphate + 1-deoxy-D-xylulose 5-phosphate = pyridoxine 5'-phosphate + phosphate + 2 H2O + H(+). It functions in the pathway cofactor biosynthesis; pyridoxine 5'-phosphate biosynthesis; pyridoxine 5'-phosphate from D-erythrose 4-phosphate: step 5/5. Catalyzes the complicated ring closure reaction between the two acyclic compounds 1-deoxy-D-xylulose-5-phosphate (DXP) and 3-amino-2-oxopropyl phosphate (1-amino-acetone-3-phosphate or AAP) to form pyridoxine 5'-phosphate (PNP) and inorganic phosphate. This Pseudomonas putida (strain W619) protein is Pyridoxine 5'-phosphate synthase.